Reading from the N-terminus, the 700-residue chain is Elongation factor G 1 (700 aa).

The 283-residue stretch at 8-290 (ERYRNIGISA…AVIDYLPSPA (283 aa)) folds into the tr-type G domain. GTP-binding positions include 17-24 (AHIDAGKT), 88-92 (DTPGH), and 142-145 (NKMD).

This sequence belongs to the TRAFAC class translation factor GTPase superfamily. Classic translation factor GTPase family. EF-G/EF-2 subfamily.

The protein localises to the cytoplasm. Its function is as follows. Catalyzes the GTP-dependent ribosomal translocation step during translation elongation. During this step, the ribosome changes from the pre-translocational (PRE) to the post-translocational (POST) state as the newly formed A-site-bound peptidyl-tRNA and P-site-bound deacylated tRNA move to the P and E sites, respectively. Catalyzes the coordinated movement of the two tRNA molecules, the mRNA and conformational changes in the ribosome. The polypeptide is Elongation factor G 1 (Bordetella bronchiseptica (strain ATCC BAA-588 / NCTC 13252 / RB50) (Alcaligenes bronchisepticus)).